We begin with the raw amino-acid sequence, 271 residues long: DNA repair protein RecO (271 aa).

The tract at residues 248-271 (AVGVEDSVRQDGDRDSTTRTPSSA) is disordered. Residues 253-264 (DSVRQDGDRDST) show a composition bias toward basic and acidic residues.

Belongs to the RecO family.

In terms of biological role, involved in DNA repair and RecF pathway recombination. The protein is DNA repair protein RecO of Rhodococcus opacus (strain B4).